The following is a 287-amino-acid chain: Ciliary microtubule inner protein 6 (287 aa).

Basic and acidic residues-rich tracts occupy residues 1–15 (MEEK…KIED) and 25–34 (EEIKHEEKPG). The disordered stretch occupies residues 1–42 (MEEKEDKHQQHKIEDAAITYVSENEEIKHEEKPGKSIHHSKS). The mn 1 stretch occupies residues 128 to 160 (GIVPLASPGTSAELQNNFIEYISFIHQYDARKT). The interval 179–287 (KPGSRPTVPK…PLNPPIKKSE (109 aa)) is disordered. Basic and acidic residues-rich tracts occupy residues 203–212 (EQSKKTEKGN) and 232–245 (LEPK…DVRQ). Residues 213–246 (SAESRMISPGLCQQNSQELLEPKTHLSETDVRQA) are mn 2.

It localises to the cell projection. The protein resides in the cilium. The polypeptide is Ciliary microtubule inner protein 6 (Homo sapiens (Human)).